Here is a 292-residue protein sequence, read N- to C-terminus: Elongation factor Ts (292 aa).

The involved in Mg(2+) ion dislocation from EF-Tu stretch occupies residues 80 to 83 (TDFV).

It belongs to the EF-Ts family.

It localises to the cytoplasm. Associates with the EF-Tu.GDP complex and induces the exchange of GDP to GTP. It remains bound to the aminoacyl-tRNA.EF-Tu.GTP complex up to the GTP hydrolysis stage on the ribosome. This chain is Elongation factor Ts, found in Cupriavidus necator (strain ATCC 17699 / DSM 428 / KCTC 22496 / NCIMB 10442 / H16 / Stanier 337) (Ralstonia eutropha).